We begin with the raw amino-acid sequence, 520 residues long: Sodium-dependent dicarboxylate transporter SdcS (520 aa).

Transmembrane regions (helical) follow at residues 30–50 (AGQL…LLFF), 55–75 (LPWE…WWIT), 77–97 (AIPI…GHIL), 104–124 (SEYG…AIAM), 160–180 (SMFV…LAII), 207–227 (IGYA…PLII), 242–262 (FAKW…ITWL), 298–318 (KVVQ…EFLL), 323–343 (VTSS…LFVI), 362–382 (ELPW…KGIS), 399–419 (GVSP…LTEV), 428–448 (MILP…LLLM), 452–472 (AMAA…AIIF), and 491–511 (LISA…VLGI).

Belongs to the SLC13A/DASS transporter (TC 2.A.47) family. NADC subfamily.

It localises to the cell membrane. Functionally, mediates the transport of the dicarboxylates fumarate, malate, and succinate across the cytoplasmic membrane via a Na(+)-electrochemical gradient. This chain is Sodium-dependent dicarboxylate transporter SdcS (sdcS), found in Staphylococcus aureus (strain bovine RF122 / ET3-1).